Reading from the N-terminus, the 509-residue chain is Legumin A (509 aa).

The N-terminal stretch at 1-21 (MAINPSLLFLSLLFLFNGCLA) is a signal peptide. 2 disulfides stabilise this stretch: Cys34–Cys67 and Cys110–Cys331. The Cupin type-1 1 domain occupies 39–273 (LRASAPQTRI…AFNVDHDIIR (235 aa)). Disordered regions lie at residues 187-248 (AGNP…ESSS) and 298-325 (PRMEEEEREERQQEQRYRHTRGGSQDNG). The span at 212 to 228 (EESEEEEGEGEEEEEED) shows a compositional bias: acidic residues. Over residues 299–314 (RMEEEEREERQQEQRY) the composition is skewed to basic and acidic residues. In terms of domain architecture, Cupin type-1 2 spans 337-486 (ENLADPERAD…SYQVSREDAR (150 aa)).

The protein belongs to the 11S seed storage protein (globulins) family. In terms of assembly, hexamer; each subunit is composed of an acidic and a basic chain derived from a single precursor and linked by a disulfide bond.

This is a seed storage protein. The sequence is that of Legumin A (LEGA) from Gossypium hirsutum (Upland cotton).